Here is a 493-residue protein sequence, read N- to C-terminus: Galactose-1-phosphate uridylyltransferase (493 aa).

Belongs to the galactose-1-phosphate uridylyltransferase type 2 family.

It localises to the cytoplasm. The enzyme catalyses alpha-D-galactose 1-phosphate + UDP-alpha-D-glucose = alpha-D-glucose 1-phosphate + UDP-alpha-D-galactose. It functions in the pathway carbohydrate metabolism; galactose metabolism. The chain is Galactose-1-phosphate uridylyltransferase from Streptococcus pneumoniae serotype 19F (strain G54).